We begin with the raw amino-acid sequence, 324 residues long: Zinc transporter ZIP1 (324 aa).

At 1 to 30 the chain is on the extracellular side; the sequence is MGPWGEPELLVWRPEAVASEPPVPVGLEVK. A helical membrane pass occupies residues 31–51; it reads LGALVLLLVLTLLCSLVPICV. Residues 52 to 68 lie on the Cytoplasmic side of the membrane; that stretch reads LRRPGANHEGSASRQKA. A helical transmembrane segment spans residues 69-89; it reads LSLVSCFAGGVFLATCLLDLL. Residues 90 to 104 lie on the Extracellular side of the membrane; sequence PDYLAAIDEALAALH. Residues 105-125 form a helical membrane-spanning segment; the sequence is VTLQFPLQEFILAMGFFLVLV. At 126–179 the chain is on the cytoplasmic side; sequence MEQITLAYKEQSGPSPLEETRALLGTVNGGPQHWHDGPGVPQASGAPATPSALR. The helical transmembrane segment at 180–200 threads the bilayer; it reads ACVLVFSLALHSVFEGLAVGL. At 201 to 206 the chain is on the extracellular side; that stretch reads QRDRAR. The helical transmembrane segment at 207–227 threads the bilayer; it reads AMELCLALLLHKGILAVSLSL. The Cytoplasmic segment spans residues 228-237; the sequence is RLLQSHLRAQ. Residues 238 to 258 traverse the membrane as a helical segment; the sequence is VVAGCGILFSCMTPLGIGLGA. The Extracellular portion of the chain corresponds to 259–272; that stretch reads ALAESAGPLHQLAQ. The helical transmembrane segment at 273–293 threads the bilayer; that stretch reads SVLEGMAAGTFLYITFLEILP. Residues 294 to 303 lie on the Cytoplasmic side of the membrane; the sequence is QELASSEQRI. The chain crosses the membrane as a helical span at residues 304-324; that stretch reads LKVILLLAGFALLTGLLFIQI.

The protein belongs to the ZIP transporter (TC 2.A.5) family. In terms of tissue distribution, ubiquitous. Expressed in most adult and fetal tissues including the epidermis.

It localises to the cell membrane. The protein localises to the endoplasmic reticulum membrane. The catalysed reaction is Zn(2+)(in) = Zn(2+)(out). Its activity is regulated as follows. Inhibited by Ni(2+) ions. Fe(2+) ions do not inhibit zinc uptake. In terms of biological role, transporter for the divalent cation Zn(2+). Mediates the influx of Zn(2+) into cells from extracellular space. Functions as the major importer of zinc from circulating blood plasma into prostate cells. The sequence is that of Zinc transporter ZIP1 from Homo sapiens (Human).